Consider the following 169-residue polypeptide: Disulfide bond formation protein B 1 (169 aa).

The Cytoplasmic segment spans residues 1 to 13 (MSALLKPLDNRLF). A helical membrane pass occupies residues 14 to 30 (WPAVAIGGLLILAFVLY). The Periplasmic portion of the chain corresponds to 31 to 48 (LQHVRGFAPCSLCIFIRL). Cysteines 40 and 43 form a disulfide. A helical transmembrane segment spans residues 49 to 64 (DVLGLVLAGIVGSLAP). Over 65–71 (RSRIAGG) the chain is Cytoplasmic. A helical membrane pass occupies residues 72–89 (IAALGMLAASLGGIYHAW). The Periplasmic segment spans residues 90–145 (SLVAEEKLAAQGMGSCKMFMGFPEWIPLDTWLPQVFQPEGLCGEVVWTLLGQSMAV). Cysteines 105 and 131 form a disulfide. A helical membrane pass occupies residues 146–164 (WSLALFVFCLLVLAAKLAF). The Cytoplasmic segment spans residues 165–169 (GRRTA).

Belongs to the DsbB family.

It localises to the cell inner membrane. In terms of biological role, required for disulfide bond formation in some periplasmic proteins. Acts by oxidizing the DsbA protein. This is Disulfide bond formation protein B 1 from Pseudomonas aeruginosa (strain UCBPP-PA14).